A 407-amino-acid polypeptide reads, in one-letter code: 12S rRNA N(4)-cytidine methyltransferase METTL15 (407 aa).

Positions 44-63 are disordered; that stretch reads EAQEETDQTGIQELHRSQDR. S-adenosyl-L-methionine is bound by residues 100-102, Asp-119, Phe-146, Asp-169, and Gln-176; that span reads GGH. Ser-358 carries the phosphoserine modification. The interval 386–407 is disordered; that stretch reads EDEDVQDNPRGRSAKLRAAIKL. The span at 397–407 shows a compositional bias: basic residues; that stretch reads RSAKLRAAIKL.

The protein belongs to the methyltransferase superfamily. RsmH family.

The protein localises to the mitochondrion matrix. The enzyme catalyses cytidine(839) in 12S rRNA + S-adenosyl-L-methionine = N(4)-methylcytidine(839) in 12S rRNA + S-adenosyl-L-homocysteine + H(+). Its function is as follows. N4-methylcytidine (m4C) methyltransferase responsible for the methylation of position C839 in mitochondrial 12S rRNA. Involved in the stabilization of 12S rRNA folding, therefore facilitating the assembly of the mitochondrial small ribosomal subunits. This chain is 12S rRNA N(4)-cytidine methyltransferase METTL15 (METTL15), found in Bos taurus (Bovine).